The sequence spans 188 residues: Ribose 1,5-bisphosphate phosphokinase PhnN (188 aa).

9–16 (GPSGAGKD) lines the ATP pocket.

Belongs to the ribose 1,5-bisphosphokinase family.

It catalyses the reaction alpha-D-ribose 1,5-bisphosphate + ATP = 5-phospho-alpha-D-ribose 1-diphosphate + ADP. It participates in metabolic intermediate biosynthesis; 5-phospho-alpha-D-ribose 1-diphosphate biosynthesis; 5-phospho-alpha-D-ribose 1-diphosphate from D-ribose 5-phosphate (route II): step 3/3. Catalyzes the phosphorylation of ribose 1,5-bisphosphate to 5-phospho-D-ribosyl alpha-1-diphosphate (PRPP). The polypeptide is Ribose 1,5-bisphosphate phosphokinase PhnN (Pectobacterium parmentieri (strain WPP163) (Pectobacterium wasabiae (strain WPP163))).